The following is a 214-amino-acid chain: Calcineurin B homologous protein 3 (214 aa).

The N-myristoyl glycine moiety is linked to residue G2. The EF-hand domain occupies 110–145; it reads CRTDKLRFLFNMYDSDNDNKITLEEYRKVVEELLSG. Residues D123, D125, D127, K129, and E134 each contribute to the Ca(2+) site.

The protein belongs to the calcineurin regulatory subunit family. CHP subfamily. Monomer. Homodimer.

It localises to the nucleus. The protein localises to the cytoplasm. It is found in the membrane. The protein resides in the cell membrane. Its subcellular location is the cell projection. It localises to the lamellipodium. The protein localises to the ruffle membrane. Its function is as follows. Functions as an integral cofactor in cell pH regulation by controlling plasma membrane-type Na(+)/H(+) exchange activity. Promotes the induction of hematopoietic stem cell differentiation toward megakaryocytic lineage. Essential for the coupling of ERK cascade activation with the expression of ETS family genes in megakaryocytic differentiation. Also involved in granulocytic differentiation in a ERK-dependent manner. Inhibits the phosphatase activity of calcineurin. In Xenopus laevis (African clawed frog), this protein is Calcineurin B homologous protein 3.